We begin with the raw amino-acid sequence, 121 residues long: Neuromedin-B (121 aa).

The N-terminal stretch at 1–24 (MTLRAVGVRLLGGLLLFALLAAGA) is a signal peptide. A Methionine amide modification is found at Met56. Residues 60-121 (SLEPPSPSLL…RRLLVQTLQK (62 aa)) constitute a propeptide that is removed on maturation. A disordered region spans residues 61–80 (LEPPSPSLLGTAPHTSLRDQ).

This sequence belongs to the bombesin/neuromedin-B/ranatensin family.

It is found in the secreted. Its subcellular location is the cell projection. The protein localises to the neuron projection. Its function is as follows. Stimulates smooth muscle contraction. Induces sighing by acting directly on the pre-Botzinger complex, a cluster of several thousand neurons in the ventrolateral medulla responsible for inspiration during respiratory activity. Contributes to the induction of sneezing following exposure to chemical irritants or allergens which causes release of NMB by nasal sensory neurons and activation of NMBR-expressing neurons in the sneeze-evoking region of the brainstem. These in turn activate neurons of the caudal ventral respiratory group, giving rise to the sneezing response. Contributes to induction of acute itch, possibly through activation of the NMBR receptor on dorsal root ganglion neurons. Increases expression of NMBR and steroidogenic mediators STAR, CYP11A1 and HSD3B1 in Leydig cells, induces secretion of testosterone by Leydig cells and also promotes Leydig cell proliferation. Plays a role in the innate immune response to influenza A virus infection by enhancing interferon alpha expression and reducing expression of IL6. Plays a role in CSF1-induced proliferation of osteoclast precursors by contributing to the positive regulation of the expression of the CSF1 receptor CSF1R. In Bos taurus (Bovine), this protein is Neuromedin-B (NMB).